The sequence spans 379 residues: Putative zinc metalloprotease BR1156/BS1330_I1152 (379 aa).

His-33 lines the Zn(2+) pocket. Glu-34 is a catalytic residue. His-37 contacts Zn(2+). Helical transmembrane passes span 39–61 (LVAR…ELLG), 122–144 (VFAG…FALY), 305–327 (FDWL…LFPL), and 355–377 (IFYR…NDLF). Positions 133-208 (TIAIFSVFFA…LNFTVERDGK (76 aa)) constitute a PDZ domain.

It belongs to the peptidase M50B family. It depends on Zn(2+) as a cofactor.

The protein localises to the cell inner membrane. The sequence is that of Putative zinc metalloprotease BR1156/BS1330_I1152 from Brucella suis biovar 1 (strain 1330).